The chain runs to 147 residues: Pathogenesis-related protein PR-4B (147 aa).

The N-terminal stretch at 1–25 is a signal peptide; the sequence is MERVNNYKLCVALLIMSVMMAMAAA. The 122-residue stretch at 26–147 folds into the Barwin domain; that stretch reads QSATNVRSTY…VNYEFVNCND (122 aa). 3 disulfide bridges follow: Cys54–Cys86, Cys75–Cys109, and Cys89–Cys145.

The protein resides in the secreted. It is found in the cell wall. This chain is Pathogenesis-related protein PR-4B, found in Nicotiana tabacum (Common tobacco).